Reading from the N-terminus, the 405-residue chain is Argininosuccinate synthase (405 aa).

ATP is bound by residues 13–21 (AYSGGLDTS) and A40. Residues Y91 and S96 each contribute to the L-citrulline site. Position 121 (G121) interacts with ATP. T123, N127, and D128 together coordinate L-aspartate. N127 is a binding site for L-citrulline. The L-citrulline site is built by R131, S182, S191, E267, and Y279.

Belongs to the argininosuccinate synthase family. Type 1 subfamily. Homotetramer.

The protein resides in the cytoplasm. It catalyses the reaction L-citrulline + L-aspartate + ATP = 2-(N(omega)-L-arginino)succinate + AMP + diphosphate + H(+). It participates in amino-acid biosynthesis; L-arginine biosynthesis; L-arginine from L-ornithine and carbamoyl phosphate: step 2/3. This Rhizobium meliloti (strain 1021) (Ensifer meliloti) protein is Argininosuccinate synthase.